Consider the following 267-residue polypeptide: MAPRRARGCRTLGLPALLLLLLLRPPATRGITCPPPMSVEHADIWVKSYSLYSRERYICNSGFKRKAGTSSLTECVLNKATNVAHWTTPSLKCIRDPALVHQRPAPPSTVTTAGVTPQPESLSPSGKEPAASSPSSNNTAATTAAIVPGSQLMPSKSPSTGTTEISSHESSHGTPSQTTAKNWELTASASHQPPGVYPQGHSDTTVAISTSTVLLCGLSAVSLLACYLKSRQTPPLASVEMEAMEALPVTWGTSSRDEDLENCSHHL.

A signal peptide spans 1–30 (MAPRRARGCRTLGLPALLLLLLLRPPATRG). The region spanning 31-95 (ITCPPPMSVE…WTTPSLKCIR (65 aa)) is the Sushi domain. Residues 31-205 (ITCPPPMSVE…VYPQGHSDTT (175 aa)) lie on the Extracellular side of the membrane. 2 disulfide bridges follow: C33–C75 and C59–C93. Residues 102 to 178 (QRPAPPSTVT…ESSHGTPSQT (77 aa)) are disordered. Positions 108 to 124 (STVTTAGVTPQPESLSP) are enriched in polar residues. The span at 129-145 (PAASSPSSNNTAATTAA) shows a compositional bias: low complexity. An N-linked (GlcNAc...) asparagine glycan is attached at N137. The segment covering 152 to 165 (LMPSKSPSTGTTEI) has biased composition (polar residues). A helical membrane pass occupies residues 206 to 228 (VAISTSTVLLCGLSAVSLLACYL). The Cytoplasmic segment spans residues 229–267 (KSRQTPPLASVEMEAMEALPVTWGTSSRDEDLENCSHHL).

In terms of assembly, the interleukin-15 receptor IL15R is a heterotrimer of IL15RA, IL2RB and IL2RG. IL15RA also self-associates. Interacts with SYK. Post-translationally, N-glycosylated and O-glycosylated. A soluble form (sIL-15RA) arises from proteolytic shedding of the membrane-anchored receptor. It also binds IL-15 and thus interferes with IL-15 binding to the membrane receptor. In terms of tissue distribution, expressed in neutrophils (at protein level). Expressed in fetal brain with higher expression in the hippocampus and cerebellum than in cortex and thalamus. Higher levels of soluble sIL-15RA form in comparison with membrane-bound forms is present in all brain structures. Isoforms 1, 3, 4, 5, 6, 7, 8 and 9: Widely expressed.

The protein localises to the membrane. It localises to the nucleus membrane. It is found in the cell surface. The protein resides in the endoplasmic reticulum membrane. Its subcellular location is the golgi apparatus membrane. The protein localises to the cytoplasmic vesicle membrane. It localises to the secreted. It is found in the extracellular space. Its function is as follows. High-affinity receptor for interleukin-15. Can signal both in cis and trans where IL15R from one subset of cells presents IL15 to neighboring IL2RG-expressing cells. In neutrophils, binds and activates kinase SYK in response to IL15 stimulation. In neutrophils, required for IL15-induced phagocytosis in a SYK-dependent manner. Expression of different isoforms may alter or interfere with signal transduction. Does not bind IL15. This Homo sapiens (Human) protein is Interleukin-15 receptor subunit alpha (IL15RA).